A 199-amino-acid chain; its full sequence is Pyridoxine/pyridoxamine 5'-phosphate oxidase (199 aa).

FMN contacts are provided by residues 44 to 49 (RTVLLK), 59 to 60 (YT), Lys-66, and Gln-91. Lys-49 contributes to the substrate binding site. Residues Tyr-109, Arg-113, and Ser-117 each contribute to the substrate site. Residues 126-127 (QS) and Trp-171 contribute to the FMN site. 177-179 (RLH) serves as a coordination point for substrate. Residue Arg-181 coordinates FMN.

It belongs to the pyridoxamine 5'-phosphate oxidase family. Homodimer. It depends on FMN as a cofactor.

The catalysed reaction is pyridoxamine 5'-phosphate + O2 + H2O = pyridoxal 5'-phosphate + H2O2 + NH4(+). It carries out the reaction pyridoxine 5'-phosphate + O2 = pyridoxal 5'-phosphate + H2O2. The protein operates within cofactor metabolism; pyridoxal 5'-phosphate salvage; pyridoxal 5'-phosphate from pyridoxamine 5'-phosphate: step 1/1. It participates in cofactor metabolism; pyridoxal 5'-phosphate salvage; pyridoxal 5'-phosphate from pyridoxine 5'-phosphate: step 1/1. Its function is as follows. Catalyzes the oxidation of either pyridoxine 5'-phosphate (PNP) or pyridoxamine 5'-phosphate (PMP) into pyridoxal 5'-phosphate (PLP). This chain is Pyridoxine/pyridoxamine 5'-phosphate oxidase, found in Xanthomonas axonopodis pv. citri (strain 306).